The primary structure comprises 227 residues: Cytochrome c oxidase subunit 2 (227 aa).

Residues 1 to 14 (MAYPFQLGLQDATS) lie on the Mitochondrial intermembrane side of the membrane. Residues 15–45 (PIMEELTNFHDHTLMIVFLISSLVLYLISLM) form a helical membrane-spanning segment. The Mitochondrial matrix portion of the chain corresponds to 46–59 (LTTKLIHTNTMDAQ). Residues 60-87 (EVETVWTILPAIILIMIALPSLRILYLM) form a helical membrane-spanning segment. Residues 88–227 (DEINNPVLTV…LFENWSTSMI (140 aa)) lie on the Mitochondrial intermembrane side of the membrane. Residues His-161, Cys-196, Glu-198, Cys-200, His-204, and Met-207 each coordinate Cu cation. Glu-198 provides a ligand contact to Mg(2+).

Belongs to the cytochrome c oxidase subunit 2 family. Component of the cytochrome c oxidase (complex IV, CIV), a multisubunit enzyme composed of 14 subunits. The complex is composed of a catalytic core of 3 subunits MT-CO1, MT-CO2 and MT-CO3, encoded in the mitochondrial DNA, and 11 supernumerary subunits COX4I, COX5A, COX5B, COX6A, COX6B, COX6C, COX7A, COX7B, COX7C, COX8 and NDUFA4, which are encoded in the nuclear genome. The complex exists as a monomer or a dimer and forms supercomplexes (SCs) in the inner mitochondrial membrane with NADH-ubiquinone oxidoreductase (complex I, CI) and ubiquinol-cytochrome c oxidoreductase (cytochrome b-c1 complex, complex III, CIII), resulting in different assemblies (supercomplex SCI(1)III(2)IV(1) and megacomplex MCI(2)III(2)IV(2)). Found in a complex with TMEM177, COA6, COX18, COX20, SCO1 and SCO2. Interacts with TMEM177 in a COX20-dependent manner. Interacts with COX20. Interacts with COX16. Cu cation is required as a cofactor.

It is found in the mitochondrion inner membrane. It catalyses the reaction 4 Fe(II)-[cytochrome c] + O2 + 8 H(+)(in) = 4 Fe(III)-[cytochrome c] + 2 H2O + 4 H(+)(out). Component of the cytochrome c oxidase, the last enzyme in the mitochondrial electron transport chain which drives oxidative phosphorylation. The respiratory chain contains 3 multisubunit complexes succinate dehydrogenase (complex II, CII), ubiquinol-cytochrome c oxidoreductase (cytochrome b-c1 complex, complex III, CIII) and cytochrome c oxidase (complex IV, CIV), that cooperate to transfer electrons derived from NADH and succinate to molecular oxygen, creating an electrochemical gradient over the inner membrane that drives transmembrane transport and the ATP synthase. Cytochrome c oxidase is the component of the respiratory chain that catalyzes the reduction of oxygen to water. Electrons originating from reduced cytochrome c in the intermembrane space (IMS) are transferred via the dinuclear copper A center (CU(A)) of subunit 2 and heme A of subunit 1 to the active site in subunit 1, a binuclear center (BNC) formed by heme A3 and copper B (CU(B)). The BNC reduces molecular oxygen to 2 water molecules using 4 electrons from cytochrome c in the IMS and 4 protons from the mitochondrial matrix. This Gerbillurus vallinus (Brush-tailed hairy-footed gerbil) protein is Cytochrome c oxidase subunit 2 (MT-CO2).